The following is a 222-amino-acid chain: Adenylate kinase (222 aa).

10-15 contributes to the ATP binding site; sequence GAGKGT. The interval 30–59 is NMP; it reads STGDMLRAAVKAGTPLGIEAKKVMDAGGLV. AMP contacts are provided by residues T31, R36, 57 to 59, 85 to 88, and Q92; these read GLV and GFPR. The segment at 122–159 is LID; sequence GRRVHVASGRTYHVKYNPPKNEGQDDETGDPLIQRDDD. ATP-binding positions include R123 and 132–133; that span reads TY. The tract at residues 135–162 is disordered; the sequence is VKYNPPKNEGQDDETGDPLIQRDDDKEE. AMP is bound by residues R156 and R167. G207 lines the ATP pocket.

It belongs to the adenylate kinase family. As to quaternary structure, monomer.

Its subcellular location is the cytoplasm. The catalysed reaction is AMP + ATP = 2 ADP. The protein operates within purine metabolism; AMP biosynthesis via salvage pathway; AMP from ADP: step 1/1. Its function is as follows. Catalyzes the reversible transfer of the terminal phosphate group between ATP and AMP. Plays an important role in cellular energy homeostasis and in adenine nucleotide metabolism. This Ralstonia nicotianae (strain ATCC BAA-1114 / GMI1000) (Ralstonia solanacearum) protein is Adenylate kinase.